The sequence spans 558 residues: Serine/threonine-protein phosphatase 2B catalytic subunit (558 aa).

The Fe cation site is built by Asp128, His130, and Asp156. Zn(2+)-binding residues include Asp156 and Asn188. Catalysis depends on His189, which acts as the Proton donor. Residues His237 and His319 each contribute to the Zn(2+) site. 2 disordered regions span residues 415-439 (LREDSATTSPGSASPALPSAANQDP) and 534-558 (ALERATREADNDKKLQTLSRRLSTS). Residues 420–435 (ATTSPGSASPALPSAA) are compositionally biased toward low complexity. Over residues 534-548 (ALERATREADNDKKL) the composition is skewed to basic and acidic residues. Over residues 549-558 (QTLSRRLSTS) the composition is skewed to polar residues.

Belongs to the PPP phosphatase family. PP-2B subfamily. As to quaternary structure, composed of two components (A and B), the A component is the catalytic subunit and the B component confers calcium sensitivity. The cofactor is Fe(3+). It depends on Zn(2+) as a cofactor.

It carries out the reaction O-phospho-L-seryl-[protein] + H2O = L-seryl-[protein] + phosphate. The catalysed reaction is O-phospho-L-threonyl-[protein] + H2O = L-threonyl-[protein] + phosphate. Calcium-dependent, calmodulin-stimulated protein phosphatase. This subunit may have a role in the calmodulin activation of calcineurin. The polypeptide is Serine/threonine-protein phosphatase 2B catalytic subunit (cna-1) (Neurospora crassa (strain ATCC 24698 / 74-OR23-1A / CBS 708.71 / DSM 1257 / FGSC 987)).